Here is a 178-residue protein sequence, read N- to C-terminus: N-alpha-acetyltransferase 20 (178 aa).

An N-acetyltransferase domain is found at 2–157 (TTLRAFTCDD…DAYDMRKALS (156 aa)). A disordered region spans residues 159 to 178 (DTEKKSIVPLPHPVRPEDIE).

This sequence belongs to the acetyltransferase family. ARD1 subfamily. In terms of assembly, component of the N-terminal acetyltransferase B (NatB) complex which is composed of naa20 and naa25.

The protein localises to the cytoplasm. Its subcellular location is the nucleus. The catalysed reaction is N-terminal L-methionyl-L-asparaginyl-[protein] + acetyl-CoA = N-terminal N(alpha)-acetyl-L-methionyl-L-asparaginyl-[protein] + CoA + H(+). It carries out the reaction N-terminal L-methionyl-L-glutaminyl-[protein] + acetyl-CoA = N-terminal N(alpha)-acetyl-L-methionyl-L-glutaminyl-[protein] + CoA + H(+). It catalyses the reaction N-terminal L-methionyl-L-aspartyl-[protein] + acetyl-CoA = N-terminal N(alpha)-acetyl-L-methionyl-L-aspartyl-[protein] + CoA + H(+). The enzyme catalyses N-terminal L-methionyl-L-glutamyl-[protein] + acetyl-CoA = N-terminal N(alpha)-acetyl-L-methionyl-L-glutamyl-[protein] + CoA + H(+). Catalytic subunit of the NatB complex which catalyzes acetylation of the N-terminal methionine residues of peptides beginning with Met-Asp, Met-Glu, Met-Asn and Met-Gln. Proteins with cell cycle functions are overrepresented in the pool of NatB substrates. Required for maintaining the structure and function of actomyosin fibers and for proper cellular migration. The protein is N-alpha-acetyltransferase 20 (naa20) of Xenopus laevis (African clawed frog).